The primary structure comprises 721 residues: MKKFKLLLLALMCVAFLPSKADEGMWLLQLMQEQHLADRMKAQGLLLEADDIYNPNRVSLKDAVGIFGGGCTGEIISPDGLILTNHHCGYGAIQQHSSVEHDYLTDGFWAKSRKEELPTPGLKFKFVERIVDVTDKVNNKVKSGEVKEEETFEYDFLKKLADEELKASDLNGKAGISAQALPFYAGNKFYLIYLKTYSDVRMVAAPPSSIGKFGGETDNWMWPRHTCDFSVFRIYADANGEPAEYNENNVPLKAKKHLAISLKGINEGDYAMIMGFPGSTNRYLTQSEVKQRMHSTNEPRIRIRGVRQDVLKKEMAASDKVRIQYASKYAGSSNYWKNSIGMNKAIIDNKVLETKAEQEAKFAAFAKAKGNTDYEKVVSEIDAAIEKSNPILYNYTCFREVFQGGIEFGTPYLILDKLKDAIKNKDKEAINKNIETLKKVYADIHNKDYDHEVDRKVAKALLPLYAEMVPADALPAFYTTIQKDFKGNYDAYVDHCYDNSIFSNEANFNKFIKKPTVKAIEKDPMTAYVRAKYDLMDKLGNELAESMKGMDLLHKTYVRGLCEMYSPEPKAPDANFTIRLTYGNVKSYNPKDGVHYKYYTTLKGVMEKEDPTNPEFVVPAKLKELYEAKDFGRYALPNGDMPACFLTTNDITGGNSGSPVINGNGELIGAAFDGNWESLSGDINFDNNLQRCIAVDIRYVLFIIDKLGGCKHLIDEMTIVE.

Residues Met-1 to Ala-21 form the signal peptide. Catalysis depends on charge relay system residues His-87, Asp-228, and Ser-656.

This sequence belongs to the peptidase S46 family.

In terms of biological role, catalyzes the removal of dipeptides from the N-terminus of oligopeptides. Most potently cleaves the synthetic substrate Met-Leu-methylcoumaryl-7-amide (Met-Leu-MCA), followed by Leu-Arg-MCA, while this enzyme does not hydrolyze Gly-Arg-, Gly-Gly-, Lys-Lys-, or Gly-Pro-MCA. The chain is Dipeptidyl-peptidase 7 (dpp7) from Phocaeicola vulgatus (strain ATCC 8482 / DSM 1447 / JCM 5826 / CCUG 4940 / NBRC 14291 / NCTC 11154) (Bacteroides vulgatus).